A 406-amino-acid polypeptide reads, in one-letter code: Tubby-like F-box protein 11 (406 aa).

The region spanning 53-108 (SCWTQLPPELLREVLARVEESEGWWPRRRDVVACAGVCRSWRGIVREIVRTPEASG) is the F-box domain.

The protein belongs to the TUB family. Ubiquitous.

This Oryza sativa subsp. japonica (Rice) protein is Tubby-like F-box protein 11 (TULP11).